The following is a 3082-amino-acid chain: Autotransporter adhesin BadA (3082 aa).

The signal sequence occupies residues 1–47; that stretch reads MKKLSVTSKRQYNLYASPISRRLSLLMKLSLETVTVMFLLGASPVLA. Positions 48–376 are binds to host cells; that stretch reads SNLALTGAKN…DAVNVAQLKA (329 aa). The interval 48 to 2901 is surface exposed passenger domain; sequence SNLALTGAKN…KVQDIATVAD (2854 aa). The interval 53-2850 is does not bind host cells, no host proangiogenic cytokine induction, collagen or fibronectin, no autoagglutination; that stretch reads TGAKNLSQNS…DARHNGVDSK (2798 aa). Residues 470-2850 form a required to bind fibronectin, not required for surface expression on bacteria, bacterial autoagglutination, host cell binding, collagen binding or host proangiogenic cytokine induction region; it reads ITGVAEGTDA…DARHNGVDSK (2381 aa). Residues 2902–3027 form an outer membrane translocation of the passenger domain region; that stretch reads SAVKYEKDST…VSNLRYYDIP (126 aa). Transmembrane regions (beta stranded) follow at residues 3028-3039, 3044-3051, 3055-3065, and 3070-3082; these read GSLSLSFGTGIW, AFAIGAGY, DGNIRSNLSIT, and QWGV…LRLK. The tract at residues 3028 to 3082 is translocator domain; sequence GSLSLSFGTGIWRSQSAFAIGAGYTSEDGNIRSNLSITSSGGQWGVGAGITLRLK.

Belongs to the autotransporter-2 (AT-2) (TC 1.B.40) family. Homotrimer. Crystals of the head region form trimers.

Its subcellular location is the cell surface. It is found in the cell outer membrane. Functionally, mediates bacterial adherence to host endothelial cells and host extracellular matrix proteins (collagen type I, III, IV, laminin and fibronectin). Static versus dynamic adherence results differ slightly; in dynamic adherence studies bacteria bind to fixed components under a constant defined flow rate to simulate in vivo infection conditions. Induces secretion of host proangiogenic cytokines such as VEGFA, ADM, IGFBP-3 and IL-8. May prevent bacterial phagocytosis by macrophages. Probably mediates bacterial autoagglutination. Negatively impacts type IV secretion system effectors (VirB/D4 T4SS and its substrate Bep proteins), possibly by preventing close association of host and bacterial cells. This implies the 2 factors are expressed at different times during infection. This chain is Autotransporter adhesin BadA, found in Bartonella henselae (Rochalimaea henselae).